A 272-amino-acid chain; its full sequence is Catabolic 3-dehydroquinate dehydratase (272 aa).

3-dehydroquinate-binding positions include 66–68 and R102; that span reads EFR. H163 (proton donor/acceptor) is an active-site residue. K190 serves as the catalytic Schiff-base intermediate with substrate. Residues R232, S251, and Q255 each contribute to the 3-dehydroquinate site.

This sequence belongs to the type-I 3-dehydroquinase family.

It carries out the reaction 3-dehydroquinate = 3-dehydroshikimate + H2O. It participates in aromatic compound metabolism; 3,4-dihydroxybenzoate biosynthesis; 3,4-dihydroxybenzoate from 3-dehydroquinate: step 1/2. Involved in the biosynthesis of protocatechuate. Catalyzes the catabolic dehydration of 3-dehydroquinate (DHQ) to yield 3-dehydroshikimate. The protein is Catabolic 3-dehydroquinate dehydratase of Acinetobacter baylyi (strain ATCC 33305 / BD413 / ADP1).